The chain runs to 210 residues: Tetraspanin-31 (210 aa).

Topologically, residues 1 to 12 are cytoplasmic; that stretch reads MVCGGFACSKNA. A helical transmembrane segment spans residues 13 to 33; the sequence is LCALNVVYMLVSLLLIGVAAW. Over 34–44 the chain is Extracellular; that stretch reads GKGLGLVSSIH. Residues 45-65 traverse the membrane as a helical segment; the sequence is IIGGVIAVGVFLLLIAVAGLV. Over 66-72 the chain is Cytoplasmic; the sequence is GAVNHHQ. A helical transmembrane segment spans residues 73 to 93; the sequence is VLLFFYMIILGLVFIFQFVIS. At 94 to 173 the chain is on the extracellular side; that stretch reads CSCLAINRSK…FLKHSDEALK (80 aa). N-linked (GlcNAc...) asparagine glycosylation is found at asparagine 100, asparagine 109, asparagine 117, and asparagine 134. A helical membrane pass occupies residues 174–194; it reads ILGGVGLFFSFTEILGVWLAM. Residues 195–210 lie on the Cytoplasmic side of the membrane; sequence RFRNQKDPRANPSAFL.

It belongs to the tetraspanin (TM4SF) family.

It is found in the membrane. The polypeptide is Tetraspanin-31 (TSPAN31) (Homo sapiens (Human)).